The chain runs to 212 residues: Large ribosomal subunit protein uL3 (212 aa).

An N5-methylglutamine modification is found at glutamine 153.

This sequence belongs to the universal ribosomal protein uL3 family. As to quaternary structure, part of the 50S ribosomal subunit. Forms a cluster with proteins L14 and L19. Post-translationally, methylated by PrmB.

Functionally, one of the primary rRNA binding proteins, it binds directly near the 3'-end of the 23S rRNA, where it nucleates assembly of the 50S subunit. The chain is Large ribosomal subunit protein uL3 from Azoarcus sp. (strain BH72).